Consider the following 129-residue polypeptide: Glycine cleavage system H protein (129 aa).

Positions 24–106 constitute a Lipoyl-binding domain; that stretch reads LFKIGVSEFA…IGDGWLLIIK (83 aa). Lys65 carries the N6-lipoyllysine modification.

It belongs to the GcvH family. In terms of assembly, the glycine cleavage system is composed of four proteins: P, T, L and H. Requires (R)-lipoate as cofactor.

Its function is as follows. The glycine cleavage system catalyzes the degradation of glycine. The H protein shuttles the methylamine group of glycine from the P protein to the T protein. This Prochlorococcus marinus subsp. pastoris (strain CCMP1986 / NIES-2087 / MED4) protein is Glycine cleavage system H protein.